Reading from the N-terminus, the 505-residue chain is Apolipoprotein N-acyltransferase (505 aa).

7 helical membrane-spanning segments follow: residues Pro6–Phe26, Phe29–Val49, Thr53–Val73, Phe80–Gly100, Phe119–Phe139, Pro152–Leu172, and Thr189–Val209. Residues Ile223 to Thr469 enclose the CN hydrolase domain. Catalysis depends on Glu263, which acts as the Proton acceptor. Lys328 is a catalytic residue. Catalysis depends on Cys379, which acts as the Nucleophile. A helical membrane pass occupies residues Leu475–Gly495.

This sequence belongs to the CN hydrolase family. Apolipoprotein N-acyltransferase subfamily.

The protein resides in the cell inner membrane. The catalysed reaction is N-terminal S-1,2-diacyl-sn-glyceryl-L-cysteinyl-[lipoprotein] + a glycerophospholipid = N-acyl-S-1,2-diacyl-sn-glyceryl-L-cysteinyl-[lipoprotein] + a 2-acyl-sn-glycero-3-phospholipid + H(+). The protein operates within protein modification; lipoprotein biosynthesis (N-acyl transfer). In terms of biological role, catalyzes the phospholipid dependent N-acylation of the N-terminal cysteine of apolipoprotein, the last step in lipoprotein maturation. The protein is Apolipoprotein N-acyltransferase of Haemophilus ducreyi (strain 35000HP / ATCC 700724).